The primary structure comprises 173 residues: Putative phosphoesterase GK0864 (173 aa).

The active-site Proton donor is the His-34. Short sequence motifs (HXTX) lie at residues 34–37 (HITL) and 115–118 (HITI). His-115 functions as the Proton acceptor in the catalytic mechanism.

Belongs to the 2H phosphoesterase superfamily. YjcG family.

This Geobacillus kaustophilus (strain HTA426) protein is Putative phosphoesterase GK0864.